The following is a 7180-amino-acid chain: MAKMGKYGLGFKWAPEFPWMLPNASEKLGNPERSEEDGFCPSAAQEPKVKGKTLVNHVRVDCSRLPALECCVQSAIIRDIFVDEDPQKVEASTMMALQFGSAVLVKPSKRLSVQAWAKLGVLPKTPAMGLFKRFCLCNTRECVCDAHVAFQLFTVQPDGVCLGNGRFIGWFVPVTAIPEYAKQWLQPWSILLRKGGNKGSVTSGHFRRAVTMPVYDFNVEDACEEVHLNPRGKYSCKAYALLRGYRGVKPILFVDQYGCDYTGCLAKGLEDYGDLTLSEMKELSPVWRDSLDNEVVVAWHVDRDPRAVMRLQTLATVRSIEYVGQPIEDMVDGDVVMREPAHLLAPNAIVKRLPRLVETMLYTDSSVTEFCYKTKLCDCGFITQFGYVDCCGDTCGFRGWVPGNMMDGFPCPGCCKSYMPWELEAQSSGVIPEGGVLFTQSTDTVNRESFKLYGHAVVPFGGAAYWSPYPGMWLPVIWSSVKSYSYLTYTGVVGCKAIVQETDAICRFLYMDYVQHKCGNLEQRAILGLDDVYHRQLLVNRGDYSLLLENVDLFVKRRAEFACKFATCGDGLVPLLLDGLVPRSYYLIKSGQAFTSLMVNFSREVVDMCMDMALLFMHDVKVATKYVKKVTGKVAVRFKALGIAVVRKITEWFDLAVDTAASAAGWLCYQLVNGLFAVANGVITFIQEVPELVKNFVDKFKTFFKVLIDSMSVSILSGLTVVKTASNRVCLAGSKVYEVVQKSLPAYIMPVGCSEATCLVGEIEPAVFEDDVVDVVKAPLTYQGCCKPPSSFEKICIVDKLYMAKCGDQFYPVVVDNDTVGVLDQCWRFPCAGKKVVFNDKPKVKEVPSTRKIKIIFALDATFDSVLSKACSEFEVDKDVTLDELLDVVLDAVESTLSPCKEHGVIGTKVCALLERLVDDYVYLFDEGGEEVIASRMYCSFSAPDEDCVATDVVYADENQDDDADDPVVLVADTQEEDGVAREQVDSADSEICVAHTGGQEMTEPDVVGSQTPIASAEETEVGEACDREGIAEVKATVCADALDACPDQVEAFDIEKVEDSILSELQTELNAPADKTYEDVLAFDAIYSETLSAFYAVPSDETHFKVCGFYSPAIERTNCWLRSTLIVMQSLPLEFKDLGMQKLWLSYKAGYDQCFVDKLVKSAPKSIILPQGGYVADFAYFFLSQCSFKVHANWRCLKCGMELKLQGLDAVFFYGDVVSHMCKCGNSMTLLSADIPYTFDFGVRDDKFCAFYTPRKVFRAACAVDVNDCHSMAVVDGKQIDGKVVTKFNGDKFDFMVGHGMTFSMSPFEIAQLYGSCITPNVCFVKGDVIKVLRRVGAEVIVNPANGRMAHGAGVAGAIAKAAGKAFINETADMVKAQGVCQVGGCYESTGGKLCKKVLNIVGPDARGHGNECYSLLERAYQHINKCDNVVTTLISAGIFSVPTDVSLTYLLGVVTKNVILVSNNQDDFDVIEKCQVTSVAGTKALSFQLAKNLCRDVKFVTNACSSLFSESSFVSSYDVLQEVEALRHDIQLDDDARVFVQANMDCLPTDWRLVNKFDSVDGVRTIKYFECPGEVFVSSQGKKFGYVQNGSFKEASVSQIRALLANKVDVLCTVDGVNFRSCCVAEGEVFGKTLGSVFCDGINVTKVRCSAIHKGKVFFQYSGLSAADLAAVKDAFGFDEPQLLQYYSMLGMCKWPVVVCGNYFAFKQSNNNCYINVACLMLQHLSLKFPKWQWRRPGNEFRSGKPLRFVSLVLAKGSFKFNEPSDSTDFIRVELREADLSGATCDLEFICKCGVKQEQRKGVDAVMHFGTLDKSGLVKGYNIACTCGDKLVHCTQFNVPFLICSNTPEGKKLPDDVVAANIFTGGSVGHYTHVKCKPKYQLYDACNVSKVSEAKGNFTDCLYLKNLKQTFSSVLTTYYLDDVKCVAYKPDLSQYYCESGKYYTKPIIKAQFRTFEKVEGVYTNFKLVGHDIAEKLNAKLGFDCNSPFMEYKITEWPTATGDVVLASDDLYVSRYSGGCVTFGKPVIWRGHEEASLKSLTYFNRPSVVCENKFNVLPVDVSEPTDRRPVPSAVLVTGAASGADASAISTEPGTAKEQKACASDSVEDQIVMEAQKKSSVTTVAVKEVKLNGVKKPVKWNCSVVVNDPTSETKVVKSLSIVDVYDMFLTGCRYVVWTANELSRLINSPTVREYVKWGMSKLIIPANLLLLRDEKQEFVAPKVVKAKAIACYGAVKWFLLYCFSWIKFNTDNKVIYTTEVASKLTFKLCCLAFKNALQTFNWSVVSRGFFLVATVFLLWFNFLYANVILSDFYLPNIGPLPMFVGQIVAWVKTTFGVLTICDFYQVTDLGYRSSFCNGSMVCELCFSGFDMLDNYESINVVQHVVDRRVSFDYISLFKLVVELVIGYSLYTVCFYPLFVLVGMQLLTTWLPEFFMLGTMHWSARLFVFVANMLPAFTLLRFYIVVTAMYKVYCLCRHVMYGCSKPGCLFCYKRNRSVRVKCSTVVGGSLRYYDVMANGGTGFCTKHQWNCLNCNSWKPGNTFITHEAAADLSKELKRPVNPTDSAYYSVIEVKQVGCSMRLFYERDGQRVYDDVSASLFVDMNGLLHSKVKGVPETHVVVVENEADKAGFLNAAVFYAQSLYRPMLMVEKKLITTANTGLSVSRTMFDLYVYSLLRHLDVDRKSLTSFVNAAHNSLKEGVQLEQVMDTFVGCARRKCAIDSDVETKSITKSVMAAVNAGVEVTDESCNNLVPTYVKSDTIVAADLGVLIQNNAKHVQSNVAKAANVACIWSVDAFNQLSADLQHRLRKACVKTGLKIKLTYNKQEANVPILTTPFSLKGGAVFSRVLQWLFVANLICFIVLWALMPTYAVHKSDMQLPLYASFKVIDNGVLRDVSVTDACFANKFNQFDQWYESTFGLVYYRNSKACPVVVAVIDQDIGHTLFNVPTKVLRYGFHVLHFITHAFATDRVQCYTPHMQIPYDNFYASGCVLSSLCTMLAHADGTPHPYCYTEGVMHNASLYSSLVPHVRYNLASSNGYIRFPEVVSEGIVRVVRTRSMTYCRVGLCEEAEEGICFNFNSSWVLNNPYYRAMPGTFCGRNAFDLIHQVLGGLVQPIDFFALTASSVAGAILAIIVVLAFYYLIKLKRAFGDYTSVVVINVIVWCINFLMLFVFQVYPTLSCLYACFYFYTTLYFPSEISVVMHLQWLVMYGAIMPLWFCITYVAVVVSNHALWLFSYCRKIGTDVRSDGTFEEMALTTFMITKESYCKLKNSVSDVAFNRYLSLYNKYRYFSGKMDTATYREAACSQLAKAMETFNHNNGNDVLYQPPTASVTTSFLQSGIVKMVSPTSKVEPCVVSVTYGNMTLNGLWLDDKVYCPRHVICSSADMTDPDYPNLLCRVTSSDFCVMSDRMSLTVMSYQMQGSLLVLTVTLQNPNTPKYSFGVVKPGETFTVLAAYNGRPQGAFHVVMRSSHTIKGSFLCGSCGSVGYVLTGDSVRFVYMHQLELSTGCHTGTDFSGNFYGPYRDAQVVQLPVQDYTQTVNVVAWLYAAILNRCNWFVQSDSCSLEEFNVWAMTNGFSSIKADLVLDALASMTGVTVEQVLAAIKRLHSGFQGKQILGSCVLEDELTPSDVYQQLAGVKLQSKRTRVIKGTCCWILASTFLFCSIISAFVKWTMFMYVTTHMLGVTLCALCFVIFAMLLIKHKHLYLTMYIMPVLCTLFYTNYLVVGYKQSFRGLAYAWLSYFVPAVDYTYMDEVLYGVVLLVAMVFVTMRSINHDVFSTMFLVGRLVSLVSMWYFGANLEEEVLLFLTSLFGTYTWTTMLSLATAKVIAKWLAVNVLYFTDIPQIKLVLLSYLCIGYVCCCYWGVLSLLNSIFRMPLGVYNYKISVQELRYMNANGLRPPRNSFEALMLNFKLLGIGGVPVIEVSQIQSRLTDVKCANVVLLNCLQHLHIASNSKLWQYCSTLHNEILATSDLSVAFDKLAQLLVVLFANPAAVDSKCLASIEEVSDDYVRDNTVLQALQSEFVNMASFVEYELAKKNLDEAKASGSANQQQIKQLEKACNIAKSAYERDRAVARKLERMADLALTNMYKEARINDKKSKVVSALQTMLFSMVRKLDNQALNSILDNAVKGCVPLNAIPPLTSNTLTIIVPDKQVFDQVVDNVYVTYAPNVWHIQSIQDADGAVKQLNEIDVNSTWPLVISANRHNEVSTVVLQNNELMPQKLRTQVVNSGSDMNCNIPTQCYYNTTGTGKIVYAILSDCDGLKYTKIVKEDGNCVVLELDPPCKFSVQDVKGLKIKYLYFVKGCNTLARGWVVGTLSSTVRLQAGTATEYASNSAILSLCAFSVDPKKTYLDYIQQGGVPVTNCVKMLCDHAGTGMAITIKPEATTNQDSYGGASVCIYCRSRVEHPDVDGLCKLRGKFVQVPLGIKDPVSYVLTHDVCQVCGFWRDGSCSCVGTGSQFQSKDTNFLNRVRGTSVNARLVPCASGLDTDVQLRAFDICNANRAGIGLYYKVNCFRFQRVDEEGNKLDKFFVVKRTNLEVYNKEKECYELTKDCGVVAEHEFFTFDVEGSRVPHIVRKDLSKFTMLDLCYALRHFDRNDCSTLKEILLTYAECDESYFQKKDWYDFVENPDIINVYKKLGPIFNRALLNTANFADTLVEAGLVGVLTLDNQDLYGQWYDFGDFVKTVPCCGVAVADSYYSYMMPMLTMCHALDSELFVNGTYREFDLVQYDFTDFKLELFNKYFKHWSMTYHPNTSECEDDRCIIHCANFNILFSMVLPKTCFGPLVRQIFVDGVPFVVSIGYHYKELGVVMNMDVDTHRYRLSLKDLLLYAADPALHVASASALLDLRTCCFSVAAITSGVKFQTVKPGNFNQDFYEFILSKGLLKEGSSVDLKHFFFTQDGNAAITDYNYYKYNLPTMVDIKQLLFVVEVVNKYFEIYEGGCIPATQVIVNNYDKSAGYPFNKFGKARLYYEALSFEEQDEIYAYTKRNVLPTLTQMNLKYAISAKNRARTVAGVSILSTMTGRMFHQKCLKSIAATRGVPVVIGTTKFYGGWDDMLRRLIKDVDSPVLMGWDYPKCDRAMPNILRIVSSLVLARKHDSCCSHTDRFYRLANECAQVLGEIVMCGGCYYVKPGGTSSGDATTAFANSVFNICQAVSANVCSLMACNGHKIEDLSIRELQKRLYSNVYRADHVDPAFVSEYYEFLNKHFSMIILSDDGVVCYNSEFASKGYIANISDFQQVLYYQNNVFMSEAKCWVETDIEKGPHEFCSQHTMLVKMDGDEVYLPYPDPSRILGAGCFVDDLLKTDSVLLIERFVSLAIDAYPLVYHENPEYQNVFRVYLEYIKKLYNDLGNQILDSISVILSTCDGQKFTDETFYKNMYLRSAVMQSVGACVVCSSQTSLRCGSCIRKPLLCCKCAYDHVMSTDHKYVLSVSPYVCNSPGCDVNDVTKLYLGGMSYYCEAHKPQYSFKLVMNGMVFGLYKQSCTGSPYIEDFNKIASCKWTEVDDYVLANECTERLKLFAAETQKATEEAFKQCYASATIREIVSDRELILSWEIGKVRPPLNKNYVFTGYHFTNNGKTVLGEYVFDKSELTNGVYYRATTTYKLSVGDVFILTSHAVSSLSAPTLVPQENYTSVRFASAYSVPETFQNNVPNYQHIGIKRYCTVQGPPGTGKSHLAIGHAVYYCTARVVYTAASHAAVDALCEKAHKFLNINDCARIVPAKLRVDCYDKFNVNDTTRKYVFTTINALPELVTDIIVVDEVSMLTNYELSVINSRVRAKHYVYIGDPAQLPAPRVLLNKGTLEPRYFNSVTKLMCCLGPDIFLGTCYRCPKEIVDTVSALVYNNKLKAKNDNSAMCFKVYYKGQTTHESSSAVNMQQIHLISKLLKANPSWSNAVFISPYNSQNYVAKRVLGLQTQTADSAQGSAYDFVIYSQTAQTAHSVNVNRFNVAITRAKKGILCVMSSMQLIGVFNFTTLTLDKINNPRLQCTTNLFKDCSKSYVGIPPCAFLLAVDDKYKVSGNLAVCLNVADSAVTYSRLISLMGFKLDLTLDGYCKLFITRDEAIKRVRAWVGFDAEGAHATRDSIGTNFPLQLGFSTGIDFVVEATGMFAERDGYVFKKAAARAPPGEQFKHLVPLMSRGQKWDVVRIRIVQMLSDHLVDLADSVVLVTWAASFELTCLRYFAKVGKEVVCSVCNKRATCFNSRTGYYGCWRHSYSCDYLYNPLIVDIQQWGYTGSLTSNHDPICSVHKGAHVASSDAIMTRCLAVHDCFCKSVNWNLEYPIISNEVSVNTSCRLLQRVMFRAAMLCNRYDVCYDIGNPKGLACVKGYDFKFYDASPVVKSVKQFVYKYEAHKDQFLDGLCMFWNCNVDKYPANAVVCRFDTRVLSKLNLPGCNGGSLYVNKHAFHTNPFTRAAFENLKPMPFFYYSDTPCVYMEGMESKQVDYVPLRSATCITRCNLGGAVCLKHAEEYREYLESYNTATTAGFTFWVYKTFDFYNLWNTFTRLQSLENVVYNLVNAGHFDGRAGELPCAVIGEKVIAKIQNEDVVVFKNNTPFPTNVAVELFAERSIRPHPELKLFRSSNIHVCWNHVLWDYAKDSVFCSSTYKVCKYTDLQCIESLNVLFDGRDNGALEAFKKCRNGVYINTTKIKSLSMIKGPQRADLNGVVVEKVGDSDVEFWFAMRRDGDDVIFSRTGSLEPSHYRSPQGNPGGNRVGDLSGNEALARGTIFTQSRFLSSFSPRSEMEKDFMDLDEDVFIAKYSLQDYAFEHVVYGSFNQKIIGGLHLLIGLARRPKKSNLVIQEFVPYDSSIHSYFITDENSGSSESVCTVIDLLLDDFVDIVKSLNLKCVSKVVNVNVDFKDFQFMLWCNEEKVMTFYPRLQAAADWKPGYVMPVLYKYLESPMERVNLWNYGKPITLPTGCMMNVAKYTQLCQYLSTTTLAVPANMRVLHLGAGSDKGVAPGSAVLRQWLPSGSILVDNDMNPFVSDSVASYYGNCITLPFDCQWDLIISDMYDPLTKNIGEYNVSKDGFFTYLCHLIRDKLALGGSVAIKITEFSWNAELYSLMGKFAFWTIFCTNVNASSSEGFLIGINWLNRTRNEIDGKTMHANYLFWRNSTMWNGGAYSLFDMTKFPLKAAGTAVVSLKPDQINDLVLSLIEKGKLLVRDTRKEVFVGDSLVNVK.

The CoV Nsp1 globular domain occupies 54–196 (LVNHVRVDCS…PWSILLRKGG (143 aa)). The BetaCoV Nsp1 C-terminal domain occupies 217 to 247 (FNVEDACEEVHLNPRGKYSCKAYALLRGYRG). The region spanning 251–513 (ILFVDQYGCD…AICRFLYMDY (263 aa)) is the CoV Nsp2 N-terminal domain. 4 residues coordinate Zn(2+): Cys-390, Cys-395, Cys-411, and Cys-414. The C4 stretch occupies residues 390 to 414 (CCGDTCGFRGWVPGNMMDGFPCPGC). In terms of domain architecture, CoV Nsp2 middle spans 518 to 706 (CGNLEQRAIL…VDKFKTFFKV (189 aa)). The CoV Nsp2 C-terminal domain maps to 726–832 (SNRVCLAGSK…LDQCWRFPCA (107 aa)). In terms of domain architecture, Ubiquitin-like 1 spans 834–946 (KKVVFNDKPK…MYCSFSAPDE (113 aa)). One can recognise a Peptidase C16 1 domain in the interval 1083-1320 (AFDAIYSETL…IAQLYGSCIT (238 aa)). Cys-1120 (for PL1-PRO activity) is an active-site residue. Residues Cys-1197, Cys-1200, Cys-1223, and Cys-1225 each contribute to the Zn(2+) site. Residues 1197–1225 (CLKCGMELKLQGLDAVFFYGDVVSHMCKC) form a C4-type 1 zinc finger. Residues His-1271 and Asp-1282 each act as for PL1-PRO activity in the active site. Residues 1321 to 1481 (PNVCFVKGDV…VIEKCQVTSV (161 aa)) form the Macro domain. In terms of domain architecture, DPUP spans 1536-1608 (DDARVFVQAN…VSQIRALLAN (73 aa)). A Ubiquitin-like 2 domain is found at 1607-1662 (ANKVDVLCTVDGVNFRSCCVAEGEVFGKTLGSVFCDGINVTKVRCSAIHKGKVFFQ). Residues 1677 to 1936 (AFGFDEPQLL…CVAYKPDLSQ (260 aa)) enclose the Peptidase C16 2 domain. The active-site For PL2-PRO activity is Cys-1715. Zn(2+)-binding residues include Cys-1793, Cys-1795, Cys-1827, and Cys-1829. A C4-type 2 zinc finger spans residues 1793 to 1829 (CKCGVKQEQRKGVDAVMHFGTLDKSGLVKGYNIACTC). Catalysis depends on for PL2-PRO activity residues His-1872 and Asp-1886. The 102-residue stretch at 1950-2051 (IKAQFRTFEK…TYFNRPSVVC (102 aa)) folds into the Nucleic acid-binding domain. Residues 2106–2259 (SVEDQIVMEA…TDNKVIYTTE (154 aa)) form the G2M domain. 3 helical membrane passes run 2228-2248 (AIACYGAVKWFLLYCFSWIKF), 2289-2309 (FFLVATVFLLWFNFLYANVIL), and 2320-2340 (LPMFVGQIVAWVKTTFGVLTI). The HD1 stretch occupies residues 2228–2465 (AIACYGAVKW…FTLLRFYIVV (238 aa)). The 62-residue stretch at 2325–2386 (GQIVAWVKTT…SINVVQHVVD (62 aa)) folds into the 3Ecto domain. 2 disulfides stabilise this stretch: Cys-2341–Cys-2365 and Cys-2356–Cys-2362. A run of 2 helical transmembrane segments spans residues 2403–2423 (LVIGYSLYTVCFYPLFVLVGM) and 2445–2465 (LFVFVANMLPAFTLLRFYIVV). Positions 2473–2563 (CLCRHVMYGC…ELKRPVNPTD (91 aa)) are Y1. In terms of domain architecture, CoV Nsp3 Y spans 2473–2840 (CLCRHVMYGC…LTTPFSLKGG (368 aa)). Positions 2477, 2482, 2487, 2490, 2523, 2526, 2530, and 2533 each coordinate Zn(2+). The tract at residues 2477 to 2490 (HVMYGCSKPGCLFC) is ZF1. A ZF2 region spans residues 2523–2533 (CTKHQWNCLNC). Residues 2564 to 2656 (SAYYSVIEVK…MVEKKLITTA (93 aa)) are Y2. The coV-Y stretch occupies residues 2564–2840 (SAYYSVIEVK…LTTPFSLKGG (277 aa)). The tract at residues 2657–2739 (NTGLSVSRTM…KSVMAAVNAG (83 aa)) is Y3. The tract at residues 2740 to 2840 (VEVTDESCNN…LTTPFSLKGG (101 aa)) is Y4. Transmembrane regions (helical) follow at residues 2846 to 2866 (VLQWLFVANLICFIVLWALMP), 3099 to 3119 (AFDLIHQVLGGLVQPIDFFAL), 3121 to 3141 (ASSVAGAILAIIVVLAFYYLI), 3153 to 3173 (VVVINVIVWCINFLMLFVFQV), 3180 to 3200 (LYACFYFYTTLYFPSEISVVM), and 3205 to 3225 (LVMYGAIMPLWFCITYVAVVV). Positions 2846–3225 (VLQWLFVANL…FCITYVAVVV (380 aa)) are HD2. Positions 3239–3336 (IGTDVRSDGT…TASVTTSFLQ (98 aa)) constitute a Nsp4C domain. Positions 3337-3639 (SGIVKMVSPT…YQQLAGVKLQ (303 aa)) constitute a Peptidase C30 domain. Active-site for 3CL-PRO activity residues include His-3377 and Cys-3481. Transmembrane regions (helical) follow at residues 3648–3668 (GTCCWILASTFLFCSIISAFV), 3678–3698 (THMLGVTLCALCFVIFAMLLI), 3705–3725 (LTMYIMPVLCTLFYTNYLVVG), 3748–3768 (TYMDEVLYGVVLLVAMVFVTM), 3775–3795 (VFSTMFLVGRLVSLVSMWYFG), 3802–3822 (VLLFLTSLFGTYTWTTMLSLA), and 3846–3866 (LVLLSYLCIGYVCCCYWGVLS). The HD3 stretch occupies residues 3648 to 3866 (GTCCWILAST…VCCCYWGVLS (219 aa)). The region spanning 3928–4016 (SRLTDVKCAN…DYVRDNTVLQ (89 aa)) is the RdRp Nsp7 cofactor domain. The RdRp Nsp8 cofactor domain maps to 4017–4213 (ALQSEFVNMA…HNEVSTVVLQ (197 aa)). In terms of domain architecture, Nsp9 ssRNA-binding spans 4214–4323 (NNELMPQKLR…GTLSSTVRLQ (110 aa)). Residues 4324–4461 (AGTATEYASN…CVGTGSQFQS (138 aa)) form the ExoN/MTase coactivator domain. Positions 4397, 4400, 4406, 4413, 4439, 4442, 4450, and 4452 each coordinate Zn(2+). Zinc fingers lie at residues 4397–4413 (CIYCRSRVEHPDVDGLC) and 4439–4452 (CQVCGFWRDGSCSC). The 256-residue stretch at 4466–4721 (FLNRVRGTSV…DSELFVNGTY (256 aa)) folds into the NiRAN domain. Positions 4669 and 4678 each coordinate Mn(2+). Positions 4722 to 4820 (REFDLVQYDF…MNMDVDTHRY (99 aa)) constitute a Nsp12 Interface domain. His-4751, Cys-4757, Cys-4762, Cys-4766, and Cys-4943 together coordinate Zn(2+). The Nsp12 RNA-dependent RNA polymerase domain occupies 4821–5388 (RLSLKDLLLY…NMYLRSAVMQ (568 aa)). The tract at residues 4823-5037 (SLKDLLLYAA…HQKCLKSIAA (215 aa)) is rdRp Fingers N-ter. The segment at 5038-5076 (TRGVPVVIGTTKFYGGWDDMLRRLIKDVDSPVLMGWDYP) is rdRp Palm N-ter. Residues 5068-5230 (PVLMGWDYPK…CYNSEFASKG (163 aa)) form the RdRp catalytic domain. The rdRp Fingers C-ter stretch occupies residues 5077 to 5135 (KCDRAMPNILRIVSSLVLARKHDSCCSHTDRFYRLANECAQVLGEIVMCGGCYYVKPGG). Positions 5098, 5101, and 5102 each coordinate Zn(2+). A rdRp Palm C-ter region spans residues 5136–5271 (TSSGDATTAF…EKGPHEFCSQ (136 aa)). Active-site residues include Ser-5215, Asp-5216, and Asp-5217. The interval 5272–5388 (HTMLVKMDGD…NMYLRSAVMQ (117 aa)) is rdRp Thumb. Positions 5389–5501 (SVGACVVCSS…EDFNKIASCK (113 aa)) constitute a CV ZBD domain. Cys-5393, Cys-5396, Cys-5404, Cys-5407, Cys-5414, Cys-5417, His-5421, His-5427, Cys-5438, Cys-5443, Cys-5460, and His-5463 together coordinate Zn(2+). The region spanning 5644–5825 (SVPETFQNNV…MCCLGPDIFL (182 aa)) is the (+)RNA virus helicase ATP-binding domain. An ATP-binding site is contributed by 5669 to 5676 (GPPGTGKS). Residues 5826–6003 (GTCYRCPKEI…FKDCSKSYVG (178 aa)) enclose the (+)RNA virus helicase C-terminal domain. The region spanning 6057-6272 (LFITRDEAIK…RCLAVHDCFC (216 aa)) is the ExoN domain. Catalysis depends on residues Asp-6075, Glu-6077, and Glu-6176. Residues Cys-6192, Cys-6195, Cys-6211, His-6214, His-6242, Cys-6246, and His-6249 each coordinate Zn(2+). Active-site residues include His-6253 and Asp-6258. Residue Cys-6264 participates in Zn(2+) binding. In terms of domain architecture, N7-MTase spans 6281–6507 (YPIISNEVSV…NLWNTFTRLQ (227 aa)). Residue 6316 to 6322 (DIGNPKG) coordinates S-adenosyl-L-methionine. The tract at residues 6394-6408 (CNGGSLYVNKHAFHT) is gpppA-binding. 4 residues coordinate Zn(2+): Cys-6432, Cys-6453, Cys-6464, and His-6467. The region spanning 6508-6568 (SLENVVYNLV…NVAVELFAER (61 aa)) is the Nsp15 N-terminal oligomerization domain. Residues 6569–6689 (SIRPHPELKL…FAMRRDGDDV (121 aa)) form the AV-Nsp11N/CoV-Nsp15M domain. The NendoU domain occupies 6739-6878 (SPRSEMEKDF…NEEKVMTFYP (140 aa)). One can recognise a Nidovirus-type SAM-dependent 2'-O-MTase domain in the interval 6883 to 7177 (AADWKPGYVM…KEVFVGDSLV (295 aa)). Active-site residues include Lys-6927, Asp-7011, Lys-7051, and Glu-7084.

It belongs to the coronaviruses polyprotein 1ab family. In terms of assembly, interacts with host PHB and PHB2. Interacts with papain-like protease nsp3 and non-structural protein 6. As to quaternary structure, monomer. Homodimer. Only the homodimer shows catalytic activity. In terms of assembly, interacts with nsp8 and nsp12 to form the replication-transcription complex (RTC): nsp12, nsp7, two subunits of nsp8, and up to two subunits of nsp13. Interacts with nsp7, nsp13 and nsp12 to form the replication-transcription complex (RTC): nsp12, nsp7, two subunits of nsp8, and up to two subunits of nsp13. As to quaternary structure, interacts with nsp12. In terms of assembly, interacts with proofreading exoribonuclease nsp14 and 2'-O-methyltransferase nsp16; these interactions enhance nsp14 and nsp16 enzymatic activities. Interacts with nsp7 and nsp8 to form the replication-transcription complex (RTC): nsp12, nsp7, two subunits of nsp8, and up to two subunits of nsp13. Interacts with nsp9. As to quaternary structure, interacts with nsp8 to form the replication-transcription complex (RTC): nsp12, nsp7, two subunits of nsp8, and up to two subunits of nsp13. Mn(2+) serves as cofactor. Requires Mg(2+) as cofactor. Specific enzymatic cleavages in vivo by its own proteases yield mature proteins. 3CL-PRO and PL-PRO proteinases are autocatalytically processed.

The protein localises to the host membrane. It localises to the host cytoplasm. Its subcellular location is the host perinuclear region. The protein resides in the host endoplasmic reticulum-Golgi intermediate compartment. The enzyme catalyses RNA(n) + a ribonucleoside 5'-triphosphate = RNA(n+1) + diphosphate. The catalysed reaction is ATP + H2O = ADP + phosphate + H(+). It catalyses the reaction Thiol-dependent hydrolysis of ester, thioester, amide, peptide and isopeptide bonds formed by the C-terminal Gly of ubiquitin (a 76-residue protein attached to proteins as an intracellular targeting signal).. It carries out the reaction a 5'-end (N(7)-methyl 5'-triphosphoguanosine)-ribonucleoside in mRNA + S-adenosyl-L-methionine = a 5'-end (N(7)-methyl 5'-triphosphoguanosine)-(2'-O-methyl-ribonucleoside) in mRNA + S-adenosyl-L-homocysteine + H(+). The enzyme catalyses uridylyl-uridylyl-ribonucleotide-RNA = a 3'-end uridylyl-2',3'-cyclophospho-uridine-RNA + a 5'-end dephospho-ribonucleoside-RNA. The catalysed reaction is a 5'-end diphospho-ribonucleoside in mRNA + GTP + H(+) = a 5'-end (5'-triphosphoguanosine)-ribonucleoside in mRNA + diphosphate. It catalyses the reaction a 5'-end (5'-triphosphoguanosine)-ribonucleoside in mRNA + S-adenosyl-L-methionine = a 5'-end (N(7)-methyl 5'-triphosphoguanosine)-ribonucleoside in mRNA + S-adenosyl-L-homocysteine. The replicase polyprotein of coronaviruses is a multifunctional protein: it contains the activities necessary for the transcription of negative stranded RNA, leader RNA, subgenomic mRNAs and progeny virion RNA as well as proteinases responsible for the cleavage of the polyprotein into functional products. Its function is as follows. Inhibits host translation by interacting with the 40S ribosomal subunit. The nsp1-40S ribosome complex further induces an endonucleolytic cleavage near the 5'UTR of host mRNAs, targeting them for degradation. Viral mRNAs are not susceptible to nsp1-mediated endonucleolytic RNA cleavage thanks to the presence of a 5'-end leader sequence and are therefore protected from degradation. By suppressing host gene expression, nsp1 facilitates efficient viral gene expression in infected cells and evasion from host immune response. Functionally, may play a role in the modulation of host cell survival signaling pathway by interacting with host PHB and PHB2. Indeed, these two proteins play a role in maintaining the functional integrity of the mitochondria and protecting cells from various stresses. In terms of biological role, responsible for the cleavages located at the N-terminus of the replicase polyprotein. In addition, PL-PRO possesses a deubiquitinating/deISGylating activity and processes both 'Lys-48'- and 'Lys-63'-linked polyubiquitin chains from cellular substrates. Participates together with nsp4 in the assembly of virally-induced cytoplasmic double-membrane vesicles necessary for viral replication. Antagonizes innate immune induction of type I interferon by blocking the phosphorylation, dimerization and subsequent nuclear translocation of host IRF3. Also prevents host NF-kappa-B signaling. Participates in the assembly of virally-induced cytoplasmic double-membrane vesicles necessary for viral replication. Its function is as follows. Cleaves the C-terminus of replicase polyprotein at 11 sites. Recognizes substrates containing the core sequence [ILMVF]-Q-|-[SGACN]. Also able to bind an ADP-ribose-1''-phosphate (ADRP). Functionally, plays a role in the initial induction of autophagosomes from host endoplasmic reticulum. Later, limits the expansion of these phagosomes that are no longer able to deliver viral components to lysosomes. In terms of biological role, forms a hexadecamer with nsp8 (8 subunits of each) that may participate in viral replication by acting as a primase. Alternatively, may synthesize substantially longer products than oligonucleotide primers. Forms a hexadecamer with nsp7 (8 subunits of each) that may participate in viral replication by acting as a primase. Alternatively, may synthesize substantially longer products than oligonucleotide primers. Its function is as follows. Forms a primer, NSP9-pU, which is utilized by the polymerase for the initiation of RNA chains. Interacts with ribosome signal recognition particle RNA (SRP). Together with NSP8, suppress protein integration into the cell membrane, thereby disrupting host immune defenses. Functionally, plays a pivotal role in viral transcription by stimulating both nsp14 3'-5' exoribonuclease and nsp16 2'-O-methyltransferase activities. Therefore plays an essential role in viral mRNAs cap methylation. In terms of biological role, RNA-directed RNA polymerase that catalyzes the transcription of viral genomic and subgenomic RNAs. Acts in complex with nsp7 and nsp8 to transcribe both the minus and positive strands of genomic RNA. The kinase-like NiRAN domain of NSP12 attaches one or more nucleotides to the amino terminus of NSP9, forming a covalent RNA-protein intermediate that serves as transcription/replication primer. Subgenomic RNAs (sgRNAs) are formed by discontinuous transcription: The polymerase has the ability to pause at transcription-regulating sequences (TRS) and jump to the leader TRS, resulting in a major deletion. This creates a series of subgenomic RNAs that are replicated, transcribed and translated. In addition, Nsp12 is a subunit of the viral RNA capping enzyme that catalyzes the RNA guanylyltransferase reaction for genomic and sub-genomic RNAs. Subsequently, the NiRAN domain transfers RNA to GDP, and forms the core cap structure GpppA-RNA. Multi-functional protein with a zinc-binding domain in N-terminus displaying RNA and DNA duplex-unwinding activities with 5' to 3' polarity. Activity of helicase is dependent on magnesium. Its function is as follows. Plays a role in viral RNA synthesis through two distinct activities. The N7-guanine methyltransferase activity plays a role in the formation of the cap structure GpppA-RNA. The proofreading exoribonuclease reduces the sensitivity of the virus to RNA mutagens during replication. This activity acts on both ssRNA and dsRNA in a 3'-5' direction. Functionally, plays a role in viral transcription/replication and prevents the simultaneous activation of host cell dsRNA sensors, such as MDA5/IFIH1, OAS, and PKR. Acts by degrading the 5'-polyuridines generated during replication of the poly(A) region of viral genomic and subgenomic RNAs. Catalyzes a two-step reaction in which a 2'3'-cyclic phosphate (2'3'-cP) is first generated by 2'-O transesterification, which is then hydrolyzed to a 3'-phosphate (3'-P). If not degraded, poly(U) RNA would hybridize with poly(A) RNA tails and activate host dsRNA sensors. In terms of biological role, 2'-O-methyltransferase: Methyltransferase that mediates mRNA cap 2'-O-ribose methylation to the 5'-cap structure of viral mRNAs. N7-methyl guanosine cap is a prerequisite for binding of nsp16. Therefore plays an essential role in viral mRNAs cap methylation which is essential to evade immune system. In Mus musculus (Mouse), this protein is Replicase polyprotein 1ab (rep).